The chain runs to 4007 residues: PKS-NRPS hybrid synthetase psoA (4007 aa).

One can recognise a Ketosynthase family 3 (KS3) domain in the interval 8–444; it reads KEPIAIIGTG…GTNCHAIVES (437 aa). Catalysis depends on for beta-ketoacyl synthase activity residues C182, H321, and H364. A malonyl-CoA:ACP transacylase (MAT) domain region spans residues 575 to 897; sequence VFTGQGAQWA…VLDRKADDIL (323 aa). The interval 969-1105 is N-terminal hotdog fold; the sequence is HPLLGSRTPD…GHIRITLAAE (137 aa). The segment at 969-1147 is dehydratase (DH) domain; sequence HPLLGSRTPD…LSYSGPFRAM (179 aa). The 308-residue stretch at 969 to 1276 folds into the PKS/mFAS DH domain; it reads HPLLGSRTPD…MSSFLPASEK (308 aa). H1001 functions as the Proton acceptor; for dehydratase activity in the catalytic mechanism. The interval 1120–1276 is C-terminal hotdog fold; sequence DLLPTSVDRF…MSSFLPASEK (157 aa). D1179 functions as the Proton donor; for dehydratase activity in the catalytic mechanism. A ketoreductase (KR) domain region spans residues 2131–2305; the sequence is TYLLVGLTGH…PASVIDIGMV (175 aa). Residues 2418-2495 form the Carrier 1 domain; sequence EARKVMENAL…QICDEVVASL (78 aa). S2455 carries the post-translational modification O-(pantetheine 4'-phosphoryl)serine. Positions 2513–2550 are disordered; the sequence is PAHKLRPWDKPSADTKRTDSIAPVPRSQIAANGPNGLP. Residues 2518–2531 are compositionally biased toward basic and acidic residues; that stretch reads RPWDKPSADTKRTD. Positions 2589–2885 are condensation (C) domain; that stretch reads QPLSLGQSRL…LETIPLWFKV (297 aa). The interval 3076–3478 is adenylation (A) domain; that stretch reads TYVQLAERAN…LGDVARALVQ (403 aa). The region spanning 3576–3652 is the Carrier 2 domain; that stretch reads TPTEARLRDV…LLAARLDGTS (77 aa). The residue at position 3612 (S3612) is an O-(pantetheine 4'-phosphoryl)serine. The segment at 3696 to 3920 is reductase (R) domain; the sequence is LTGATGFLGG…INVETVSNNI (225 aa).

The protein in the C-terminal section; belongs to the NRP synthetase family.

It participates in secondary metabolite biosynthesis. Its function is as follows. PKS-NRPS hybrid synthetase; part of the gene cluster that mediates the biosynthesis of pseurotin A, a competitive inhibitor of chitin synthase and an inducer of nerve-cell proliferation. The PKS-NRPS hybrid synthetase psoA is responsible for the biosynthesis of azaspirene, one of the first intermediates having the 1-oxa-7-azaspiro[4,4]-non-2-ene-4,6-dione core of pseurotin, via condensation of one acetyl-CoA, 4 malonyl-CoA, and a L-phenylalanine molecule. The dual-functional monooxygenase/methyltransferase psoF seems to be involved in the addition of the C3 methyl group onto the pseurotin scaffold. Azaspirene is then converted to synerazol through 4 steps including oxidation of C17 by the cytochrome P450 monooxygenase psoD, O-methylation of the hydroxy group of C8 by the methyltransferase psoC, and the trans-to-cis isomerization of the C13 olefin by the glutathione S-transferase psoE. The fourth step of synerazol production is performed by the dual-functional monooxygenase/methyltransferase psoF which seems to catalyze the epoxidation of the intermediate deepoxy-synerazol. Synerazol can be attacked by a water molecule nonenzymatically at two different positions to yield two diol products, pseurotin A and pseurotin D. This chain is PKS-NRPS hybrid synthetase psoA, found in Aspergillus fumigatus (strain ATCC MYA-4609 / CBS 101355 / FGSC A1100 / Af293) (Neosartorya fumigata).